The following is a 377-amino-acid chain: 4-hydroxy-3-methylbut-2-en-1-yl diphosphate synthase (flavodoxin) (377 aa).

Residues C272, C275, C307, and E314 each coordinate [4Fe-4S] cluster.

The protein belongs to the IspG family. Requires [4Fe-4S] cluster as cofactor.

The catalysed reaction is (2E)-4-hydroxy-3-methylbut-2-enyl diphosphate + oxidized [flavodoxin] + H2O + 2 H(+) = 2-C-methyl-D-erythritol 2,4-cyclic diphosphate + reduced [flavodoxin]. The protein operates within isoprenoid biosynthesis; isopentenyl diphosphate biosynthesis via DXP pathway; isopentenyl diphosphate from 1-deoxy-D-xylulose 5-phosphate: step 5/6. Its function is as follows. Converts 2C-methyl-D-erythritol 2,4-cyclodiphosphate (ME-2,4cPP) into 1-hydroxy-2-methyl-2-(E)-butenyl 4-diphosphate. The chain is 4-hydroxy-3-methylbut-2-en-1-yl diphosphate synthase (flavodoxin) from Zymomonas mobilis subsp. mobilis (strain ATCC 31821 / ZM4 / CP4).